The primary structure comprises 358 residues: Photosystem II protein D1 2 (358 aa).

3 consecutive transmembrane segments (helical) span residues Tyr-28 to Ile-45, His-117 to Leu-132, and Trp-141 to Ala-155. His-117 contacts chlorophyll a. Position 125 (Tyr-125) interacts with pheophytin a. The [CaMn4O5] cluster site is built by Asp-169 and Glu-188. A helical transmembrane segment spans residues Phe-196–Leu-217. His-197 contacts chlorophyll a. Residues His-214 and Ser-263–Phe-264 each bind a quinone. A Fe cation-binding site is contributed by His-214. Residue His-271 participates in Fe cation binding. The helical transmembrane segment at Phe-273–Met-287 threads the bilayer. Residues His-331, Glu-332, Asp-341, and Ala-343 each contribute to the [CaMn4O5] cluster site. Positions Ala-344–Gly-358 are excised as a propeptide.

It belongs to the reaction center PufL/M/PsbA/D family. In terms of assembly, PSII is composed of 1 copy each of membrane proteins PsbA, PsbB, PsbC, PsbD, PsbE, PsbF, PsbH, PsbI, PsbJ, PsbK, PsbL, PsbM, PsbT, PsbX, PsbY, PsbZ, Psb30/Ycf12, peripheral proteins PsbO, CyanoQ (PsbQ), PsbU, PsbV and a large number of cofactors. It forms dimeric complexes. It depends on The D1/D2 heterodimer binds P680, chlorophylls that are the primary electron donor of PSII, and subsequent electron acceptors. It shares a non-heme iron and each subunit binds pheophytin, quinone, additional chlorophylls, carotenoids and lipids. D1 provides most of the ligands for the Mn4-Ca-O5 cluster of the oxygen-evolving complex (OEC). There is also a Cl(-1) ion associated with D1 and D2, which is required for oxygen evolution. The PSII complex binds additional chlorophylls, carotenoids and specific lipids. as a cofactor. Tyr-160 forms a radical intermediate that is referred to as redox-active TyrZ, YZ or Y-Z. In terms of processing, C-terminally processed by CtpA; processing is essential to allow assembly of the oxygen-evolving complex and thus photosynthetic growth.

The protein localises to the cellular thylakoid membrane. The enzyme catalyses 2 a plastoquinone + 4 hnu + 2 H2O = 2 a plastoquinol + O2. Its function is as follows. Photosystem II (PSII) is a light-driven water:plastoquinone oxidoreductase that uses light energy to abstract electrons from H(2)O, generating O(2) and a proton gradient subsequently used for ATP formation. It consists of a core antenna complex that captures photons, and an electron transfer chain that converts photonic excitation into a charge separation. The D1/D2 (PsbA/PsbD) reaction center heterodimer binds P680, the primary electron donor of PSII as well as several subsequent electron acceptors. The sequence is that of Photosystem II protein D1 2 from Synechococcus sp. (strain CC9605).